The following is a 94-amino-acid chain: Protein EGG APPARATUS-1 (94 aa).

The Cytoplasmic portion of the chain corresponds to 1–15 (MSSCPAIVNMKDDDG). The helical; Signal-anchor for type II membrane protein transmembrane segment at 16–36 (IGAMGAAVAFAAMGVFGIYFL) threads the bilayer. The Extracellular portion of the chain corresponds to 37 to 94 (WPVVGPTSAGMMMKAPGAAGWVICRAVFEANPQLYFTILRTAGAAAAAATFAACSIAS).

In terms of processing, possible proteolysis of the C-terminal region from the predicted transmembrane domain to permit secretion and transport of the mature protein to the cell walls of the nucellus, allowing the spreading from the egg cell apparatus to the micropylar opening of the ovule. Expressed only in the egg apparatus, consisting of the egg cell and two synergids. Not detected in the central cell, antipodals, and nucellar and integumental cells.

It is found in the membrane. Functionally, involved in short-range signaling required for pollen tube attraction by the female gametophyte. Required for female fertility. The sequence is that of Protein EGG APPARATUS-1 (Ea1) from Zea mays (Maize).